The chain runs to 126 residues: Protein ApaG (126 aa).

Residues 2-126 enclose the ApaG domain; the sequence is SALDDSIRVE…FRLALPGLLH (125 aa).

This chain is Protein ApaG, found in Shewanella sp. (strain MR-7).